A 315-amino-acid polypeptide reads, in one-letter code: Aspartate carbamoyltransferase catalytic subunit (315 aa).

2 residues coordinate carbamoyl phosphate: arginine 61 and threonine 62. Lysine 90 contributes to the L-aspartate binding site. Arginine 111, histidine 139, and glutamine 142 together coordinate carbamoyl phosphate. Arginine 172 and arginine 234 together coordinate L-aspartate. Positions 274 and 275 each coordinate carbamoyl phosphate.

The protein belongs to the aspartate/ornithine carbamoyltransferase superfamily. ATCase family. In terms of assembly, heterooligomer of catalytic and regulatory chains.

The enzyme catalyses carbamoyl phosphate + L-aspartate = N-carbamoyl-L-aspartate + phosphate + H(+). Its pathway is pyrimidine metabolism; UMP biosynthesis via de novo pathway; (S)-dihydroorotate from bicarbonate: step 2/3. Its function is as follows. Catalyzes the condensation of carbamoyl phosphate and aspartate to form carbamoyl aspartate and inorganic phosphate, the committed step in the de novo pyrimidine nucleotide biosynthesis pathway. The sequence is that of Aspartate carbamoyltransferase catalytic subunit from Hyperthermus butylicus (strain DSM 5456 / JCM 9403 / PLM1-5).